A 78-amino-acid polypeptide reads, in one-letter code: Large ribosomal subunit protein bL28 (78 aa).

The protein belongs to the bacterial ribosomal protein bL28 family.

This Leifsonia xyli subsp. xyli (strain CTCB07) protein is Large ribosomal subunit protein bL28.